Reading from the N-terminus, the 376-residue chain is MGLLAYLKTQFVVHLLIGFVFVVSGLIINFTQLCTLALWPISKHLYRRINCRLAYSLWSQLVMLLEWWSCTECTLFTDQATVDHFGKEHVVVILNHNFEIDFLCGWTMCERFGVLGSSKVLAKRELLCVPLIGWTWYFLEIVFCKRKWEEDRDTVIEGLRRLADYPEYMWFLLYCEGTRFTETKHRISMEVAASKGLPPLKYHLLPRTKGFTTAVQCLRGTVAAIYDVTLNFRGNKNPSLLGILYGKKYEADMCVRRFPLEDIPADETSAAQWLHKLYQEKDALQEMYKQKGVFPGEQFKPARRPWTLLNFLCWATILLSPLFSFVLGVFASGSPLLILTFLGFVGAASFGVRRLIGVTEIEKGSSYGNQELKKKE.

Residues 1–124 (MGLLAYLKTQ…LGSSKVLAKR (124 aa)) are Cytoplasmic-facing. Positions 96–101 (HNFEID) match the HXXXXD motif motif. A helical membrane pass occupies residues 125 to 145 (ELLCVPLIGWTWYFLEIVFCK). The Lumenal segment spans residues 146-316 (RKWEEDRDTV…TLLNFLCWAT (171 aa)). Residues 317-339 (ILLSPLFSFVLGVFASGSPLLIL) form a helical membrane-spanning segment. Residues 340–376 (TFLGFVGAASFGVRRLIGVTEIEKGSSYGNQELKKKE) lie on the Cytoplasmic side of the membrane.

Belongs to the 1-acyl-sn-glycerol-3-phosphate acyltransferase family. Widely expressed. Mainly expressed in testis, kidney and liver (at protein level).

The protein resides in the endoplasmic reticulum membrane. Its subcellular location is the nucleus envelope. The catalysed reaction is a 1-acyl-sn-glycero-3-phosphate + an acyl-CoA = a 1,2-diacyl-sn-glycero-3-phosphate + CoA. It catalyses the reaction pentadecanoyl-CoA + 1-(9Z-octadecenoyl)-sn-glycero-3-phosphate = 1-(9Z)-octadecenoyl-2-pentadecanoyl-sn-glycero-3-phosphate + CoA. It carries out the reaction heptadecanoyl-CoA + 1-(9Z-octadecenoyl)-sn-glycero-3-phosphate = 1-(9Z)-octadecenoyl-2-heptadecanoyl-sn-glycero-3-phosphate + CoA. The enzyme catalyses 1-(9Z-octadecenoyl)-sn-glycero-3-phosphate + octadecanoyl-CoA = 1-(9Z-octadecenoyl)-2-octadecanoyl-sn-glycero-3-phosphate + CoA. The catalysed reaction is nonadecanoyl-CoA + 1-(9Z-octadecenoyl)-sn-glycero-3-phosphate = 1-(9Z)-octadecenoyl-2-nonadecanoyl-sn-glycero-3-phosphate + CoA. It catalyses the reaction 1-(9Z-octadecenoyl)-sn-glycero-3-phosphate + (5Z,8Z,11Z,14Z)-eicosatetraenoyl-CoA = 1-(9Z)-octadecenoyl-2-(5Z,8Z,11Z,14Z)-eicosatetraenoyl-sn-glycero-3-phosphate + CoA. It carries out the reaction 1-(9Z-octadecenoyl)-sn-glycero-3-phosphate + (9Z)-octadecenoyl-CoA = 1,2-di-(9Z-octadecenoyl)-sn-glycero-3-phosphate + CoA. The enzyme catalyses 1-(9Z-octadecenoyl)-sn-glycero-3-phosphate + (9Z,12Z)-octadecadienoyl-CoA = 1-(9Z)-octadecenoyl-2-(9Z,12Z)-octadecadienoyl-sn-glycero-3-phosphate + CoA. The catalysed reaction is 1-(9Z-octadecenoyl)-sn-glycero-3-phosphocholine + (5Z,8Z,11Z,14Z)-eicosatetraenoyl-CoA = 1-(9Z)-octadecenoyl-2-(5Z,8Z,11Z,14Z)-icosatetraenoyl-sn-glycero-3-phosphocholine + CoA. It catalyses the reaction 1-(9Z-octadecenoyl)-sn-glycero-3-phospho-(1D-myo-inositol) + (5Z,8Z,11Z,14Z)-eicosatetraenoyl-CoA = 1-(9Z-octadecenoyl)-2-(5Z,8Z,11Z,14Z-eicosatetraenoyl)-sn-glycero-3-phospho-1D-myo-inositol + CoA. It carries out the reaction 1-(9Z-octadecenoyl)-sn-glycero-3-phospho-L-serine + (5Z,8Z,11Z,14Z)-eicosatetraenoyl-CoA = 1-(9Z-octadecenoyl)-2-(5Z,8Z,11Z,14Z-eicosatetraenoyl)-sn-glycero-3-phospho-L-serine + CoA. The enzyme catalyses 1-hexadecanoyl-sn-glycero-3-phosphate + (9Z)-octadecenoyl-CoA = 1-hexadecanoyl-2-(9Z-octadecenoyl)-sn-glycero-3-phosphate + CoA. The catalysed reaction is 1-hexadecanoyl-sn-glycero-3-phosphate + (5Z,8Z,11Z,14Z)-eicosatetraenoyl-CoA = 1-hexadecanoyl-2-(5Z,8Z,11Z,14Z-eicosatetraenoyl)-sn-glycero-3-phosphate + CoA. It catalyses the reaction 1-heptadecanoyl-sn-glycero-3-phosphate + (5Z,8Z,11Z,14Z)-eicosatetraenoyl-CoA = 1-heptadecanoyl-2-(5Z,8Z,11Z,14Z)-eicosatetraenoyl-sn-glycero-3-phosphate + CoA. It carries out the reaction 1-octadecanoyl-sn-glycero-3-phosphate + (9Z)-octadecenoyl-CoA = 1-octadecanoyl-2-(9Z-octadecenoyl)-sn-glycero-3-phosphate + CoA. The enzyme catalyses 1-octadecanoyl-sn-glycero-3-phosphate + (5Z,8Z,11Z,14Z)-eicosatetraenoyl-CoA = 1-octadecanoyl-2-(5Z,8Z,11Z,14Z-eicosatetraenoyl)-sn-glycero-3-phosphate + CoA. The catalysed reaction is 1-(9Z-octadecenoyl)-sn-glycero-3-phosphate + hexadecanoyl-CoA = 1-hexadecanoyl-2-(9Z-octadecenoyl)-sn-glycero-3-phosphate + CoA. It catalyses the reaction 1-O-(9Z-octadecenyl)-sn-glycero-3-phosphate + (5Z,8Z,11Z,14Z)-eicosatetraenoyl-CoA = 1-O-(9Z-octadecenyl)-2-(5Z,8Z,11Z,14Z-eicosatetraenoyl)-sn-glycero-3-phosphate + CoA. It carries out the reaction a 1-acyl-sn-glycero-3-phospho-(1D-myo-inositol) + (5Z,8Z,11Z,14Z)-eicosatetraenoyl-CoA = a 1-acyl-2-(5Z,8Z,11Z,14Z-eicosatetraenoyl)-sn-glycero-3-phospho-(1D-myo-inositol) + CoA. The protein operates within phospholipid metabolism; CDP-diacylglycerol biosynthesis; CDP-diacylglycerol from sn-glycerol 3-phosphate: step 2/3. In males, activity increases in an age-dependent fashion, maybe derived from the induction by sex-hormones. Functionally, converts 1-acyl-sn-glycerol-3-phosphate (lysophosphatidic acid or LPA) into 1,2-diacyl-sn-glycerol-3-phosphate (phosphatidic acid or PA) by incorporating an acyl moiety at the sn-2 position of the glycerol backbone. Acts on LPA containing saturated or unsaturated fatty acids C16:0-C20:4 at the sn-1 position using C18:1, C20:4 or C18:2-CoA as the acyl donor. Also acts on lysophosphatidylcholine, lysophosphatidylinositol and lysophosphatidylserine using C18:1 or C20:4-CoA. Has a preference for arachidonoyl-CoA as a donor. Also has a modest lysophosphatidylinositol acyltransferase (LPIAT) activity, converts lysophosphatidylinositol (LPI) into phosphatidylinositol. This is 1-acyl-sn-glycerol-3-phosphate acyltransferase gamma from Mus musculus (Mouse).